Here is a 954-residue protein sequence, read N- to C-terminus: MTTPTEFQFTDYQPYDFANRRHIGPSPAEMTDMLKVIGYNSLDGLIDATLPPSIRQKAPLVWGAPMTEREALDKLRETANKNKVLVSLIGQGYYGTITPPVIQRNILENPAWYTAYTPYQPEISQGRLEALLNYQTMICDLTGLDVANASLLDEATAAAEGMAIAERVAKSKAKAFFVDADCHPQTIALIRTRAEPLGWSVIVGNPVTDLDPVDVFGAIFQYPGTHGHVHDFTGLISRLHQTGAIAIVAADILALTLLKSPGEMGADIAVGSSQRFGVPVGYGGPHAAYMSVKDAIKRSMPGRLVGVSVDARGNRAYRLSLQTREQHIRREKATSNICTAQVLLAVMASMYAVFHGPKGIKAIAQQVHQKAVLMAKGLEKLGYKVEPETFFDTITVDVGHMQGLILRAAVAEGVNLRKVGETKIGMSLDERTRPATLEAVWRAFGGNFTIADFEPSYRLPKGLLRTSDYLTHPIFHMNRAESEMTRYIRRLSDRDLALDRSMIPLGSCTMKLNATAEMLPITWPEFSDIHPFVPADQALGYREMIDDLIEKLCAVTGYDAFSMQPNSGAQGEYAGLLTIRNYHIANGDGHRDVCLIPTSAHGTNPASAQMVGMKVVVVKVRENGDIDLDDFRAKAEQHAANLACCMITYPSTHGVFEETVKEICDLVHEHGGQVYLDGANMNAMVGLSRPGDIGSDVSHLNLHKTFCIPHGGGGPGMGPIGVKAHLAPYLPGHPETDGRPGAVSAAAFGSASILPISWSYCLMMGGEGLTQATKVAILNANYIAARLRGAYDVLYKSETGRVAHECIIDTRPLVDSSGVTVDDVAKRLIDCGFHAPTMSWPVAGTLMIEPTESETKAELDRFCEAILAIREEARAIEDGRMDKVNNPLKNAPHTVEDLVGEWDRPYSREQACFPPGAFRVDKYWSPVNRVDNVYGDRNLICTCPPVESYAEAAE.

The residue at position 704 (Lys704) is an N6-(pyridoxal phosphate)lysine.

This sequence belongs to the GcvP family. As to quaternary structure, the glycine cleavage system is composed of four proteins: P, T, L and H. Pyridoxal 5'-phosphate serves as cofactor.

It catalyses the reaction N(6)-[(R)-lipoyl]-L-lysyl-[glycine-cleavage complex H protein] + glycine + H(+) = N(6)-[(R)-S(8)-aminomethyldihydrolipoyl]-L-lysyl-[glycine-cleavage complex H protein] + CO2. Functionally, the glycine cleavage system catalyzes the degradation of glycine. The P protein binds the alpha-amino group of glycine through its pyridoxal phosphate cofactor; CO(2) is released and the remaining methylamine moiety is then transferred to the lipoamide cofactor of the H protein. The protein is Glycine dehydrogenase (decarboxylating) of Rhizobium johnstonii (strain DSM 114642 / LMG 32736 / 3841) (Rhizobium leguminosarum bv. viciae).